Reading from the N-terminus, the 142-residue chain is Large ribosomal subunit protein uL13 (142 aa).

It belongs to the universal ribosomal protein uL13 family. In terms of assembly, part of the 50S ribosomal subunit.

This protein is one of the early assembly proteins of the 50S ribosomal subunit, although it is not seen to bind rRNA by itself. It is important during the early stages of 50S assembly. The polypeptide is Large ribosomal subunit protein uL13 (Desulfotalea psychrophila (strain LSv54 / DSM 12343)).